Reading from the N-terminus, the 1169-residue chain is Zinc finger protein 862 (1169 aa).

Residues 11–77 form the KRAB 1 domain; that stretch reads VTFDDITVYL…SVQGQRSLLE (67 aa). The segment at 135–218 adopts a TTF-type 1 zinc-finger fold; it reads KPRSIQKSWF…RDPIWAARFR (84 aa). Residues 333–404 form the KRAB 2 domain; that stretch reads VVFEDVAVYF…DPNGPKWGKG (72 aa). The segment at 461 to 544 adopts a TTF-type 2 zinc-finger fold; it reads RPRSIQRSWF…KEDTPHTALV (84 aa).

It localises to the nucleus. Its function is as follows. May be involved in transcriptional regulation. This Homo sapiens (Human) protein is Zinc finger protein 862 (ZNF862).